We begin with the raw amino-acid sequence, 195 residues long: FK506-binding protein 2 (195 aa).

A signal peptide spans 1–19 (MKAALFLSALASTAVGVVA). In terms of domain architecture, PPIase FKBP-type spans 39-127 (GDGVHMHYRG…VFETELVGID (89 aa)). The short motif at 192–195 (HEEL) is the Prevents secretion from ER element.

Belongs to the FKBP-type PPIase family. FKBP2 subfamily.

It localises to the endoplasmic reticulum. It catalyses the reaction [protein]-peptidylproline (omega=180) = [protein]-peptidylproline (omega=0). Its activity is regulated as follows. Inhibited by both FK506 and rapamycin. PPIases accelerate the folding of proteins. It catalyzes the cis-trans isomerization of proline imidic peptide bonds in oligopeptides. The sequence is that of FK506-binding protein 2 (FPR2) from Gibberella zeae (strain ATCC MYA-4620 / CBS 123657 / FGSC 9075 / NRRL 31084 / PH-1) (Wheat head blight fungus).